The following is a 109-amino-acid chain: Putative RNase MJ1380 (109 aa).

Catalysis depends on residues arginine 76 and histidine 81. The short motif at 76 to 83 (RNILIHKY) is the RX(4)HXY motif element. The residue at position 83 (tyrosine 83) is an O-di-AMP-tyrosine.

This sequence belongs to the HepT RNase toxin family. In terms of assembly, homodimer, probably forms a complex with cognate antitoxin MJ1379. In terms of processing, modified by cognate antitoxin MJ1379; probably at least 2 successive AMPylation events occur on Tyr-83.

Functionally, probable toxic component of a putative type VII toxin-antitoxin (TA) system, probably an RNase. Probably neutralized by cognate antitoxin MJ1379. Neutralization may be due to AMPylation by antitoxin MJ1379. The protein is Putative RNase MJ1380 of Methanocaldococcus jannaschii (strain ATCC 43067 / DSM 2661 / JAL-1 / JCM 10045 / NBRC 100440) (Methanococcus jannaschii).